The chain runs to 318 residues: Phosphatidylglycerol--prolipoprotein diacylglyceryl transferase (318 aa).

The next 3 membrane-spanning stretches (helical) occupy residues 24 to 44, 60 to 80, and 115 to 135; these read GPST…YLLP, LLLL…VFEI, and LFSG…LFIT. Residue Arg164 coordinates a 1,2-diacyl-sn-glycero-3-phospho-(1'-sn-glycerol). The next 2 membrane-spanning stretches (helical) occupy residues 198 to 218 and 285 to 305; these read VPVW…FFYF and GFSQ…FFIL.

This sequence belongs to the Lgt family.

It localises to the cell inner membrane. It carries out the reaction L-cysteinyl-[prolipoprotein] + a 1,2-diacyl-sn-glycero-3-phospho-(1'-sn-glycerol) = an S-1,2-diacyl-sn-glyceryl-L-cysteinyl-[prolipoprotein] + sn-glycerol 1-phosphate + H(+). Its pathway is protein modification; lipoprotein biosynthesis (diacylglyceryl transfer). Functionally, catalyzes the transfer of the diacylglyceryl group from phosphatidylglycerol to the sulfhydryl group of the N-terminal cysteine of a prolipoprotein, the first step in the formation of mature lipoproteins. This chain is Phosphatidylglycerol--prolipoprotein diacylglyceryl transferase, found in Leptospira interrogans serogroup Icterohaemorrhagiae serovar copenhageni (strain Fiocruz L1-130).